Reading from the N-terminus, the 260-residue chain is Cell wall synthesis protein Wag31 (260 aa).

Positions 31–64 (FLDLVENELTRLIEENSDLRQRINELDQELAAGG) form a coiled coil. Thr73 is modified (phosphothreonine). Positions 161–196 (MLADAQSRSEAQLRQAQEKADALQADAERKHSEIMG) form a coiled coil. Positions 233–260 (ELGQRGSAAPVDSNADAGGFDQFNRGKN) are disordered.

Belongs to the DivIVA family. Forms homooligomers. In terms of processing, phosphorylated by PknA. Phosphorylation enhances polar localization, which in turn heightens polar peptidoglycan biosynthesis.

The protein localises to the cytoplasm. In terms of biological role, important for maintaining cell shape and cell wall integrity by localizing peptidoglycan synthesis to the cell poles. This is Cell wall synthesis protein Wag31 (wag31) from Mycobacterium tuberculosis (strain CDC 1551 / Oshkosh).